The sequence spans 258 residues: Imidazole glycerol phosphate synthase subunit HisF (258 aa).

Catalysis depends on residues aspartate 11 and aspartate 130.

Belongs to the HisA/HisF family. Heterodimer of HisH and HisF.

Its subcellular location is the cytoplasm. The enzyme catalyses 5-[(5-phospho-1-deoxy-D-ribulos-1-ylimino)methylamino]-1-(5-phospho-beta-D-ribosyl)imidazole-4-carboxamide + L-glutamine = D-erythro-1-(imidazol-4-yl)glycerol 3-phosphate + 5-amino-1-(5-phospho-beta-D-ribosyl)imidazole-4-carboxamide + L-glutamate + H(+). It participates in amino-acid biosynthesis; L-histidine biosynthesis; L-histidine from 5-phospho-alpha-D-ribose 1-diphosphate: step 5/9. Its function is as follows. IGPS catalyzes the conversion of PRFAR and glutamine to IGP, AICAR and glutamate. The HisF subunit catalyzes the cyclization activity that produces IGP and AICAR from PRFAR using the ammonia provided by the HisH subunit. The sequence is that of Imidazole glycerol phosphate synthase subunit HisF from Nitrobacter hamburgensis (strain DSM 10229 / NCIMB 13809 / X14).